Consider the following 258-residue polypeptide: Hydroxyacylglutathione hydrolase (258 aa).

Zn(2+) is bound by residues histidine 55, histidine 57, aspartate 59, histidine 60, histidine 115, aspartate 132, and histidine 170.

This sequence belongs to the metallo-beta-lactamase superfamily. Glyoxalase II family. Monomer. Requires Zn(2+) as cofactor.

It carries out the reaction an S-(2-hydroxyacyl)glutathione + H2O = a 2-hydroxy carboxylate + glutathione + H(+). It functions in the pathway secondary metabolite metabolism; methylglyoxal degradation; (R)-lactate from methylglyoxal: step 2/2. Thiolesterase that catalyzes the hydrolysis of S-D-lactoyl-glutathione to form glutathione and D-lactic acid. The polypeptide is Hydroxyacylglutathione hydrolase (Shewanella halifaxensis (strain HAW-EB4)).